Here is a 346-residue protein sequence, read N- to C-terminus: tRNA N6-adenosine threonylcarbamoyltransferase (346 aa).

The Fe cation site is built by H117 and H121. Residues 139–143 (VVSGG), D172, G185, D189, and N278 each bind substrate. D307 contacts Fe cation.

It belongs to the KAE1 / TsaD family. In terms of assembly, may form a heterodimer with TsaB. Requires Fe(2+) as cofactor.

The protein resides in the cytoplasm. The catalysed reaction is L-threonylcarbamoyladenylate + adenosine(37) in tRNA = N(6)-L-threonylcarbamoyladenosine(37) in tRNA + AMP + H(+). Its function is as follows. Required for the formation of a threonylcarbamoyl group on adenosine at position 37 (t(6)A37) in tRNAs that read codons beginning with adenine. Is involved in the transfer of the threonylcarbamoyl moiety of threonylcarbamoyl-AMP (TC-AMP) to the N6 group of A37, together with TsaE and TsaB; this reaction does not require ATP in vitro. TsaD likely plays a direct catalytic role in this reaction. The polypeptide is tRNA N6-adenosine threonylcarbamoyltransferase (Bacillus subtilis (strain 168)).